Here is a 61-residue protein sequence, read N- to C-terminus: Small ribosomal subunit protein uS14 (61 aa).

Zn(2+) is bound by residues Cys24, Cys27, Cys40, and Cys43.

It belongs to the universal ribosomal protein uS14 family. Zinc-binding uS14 subfamily. Part of the 30S ribosomal subunit. Contacts proteins S3 and S10. The cofactor is Zn(2+).

Its function is as follows. Binds 16S rRNA, required for the assembly of 30S particles and may also be responsible for determining the conformation of the 16S rRNA at the A site. The sequence is that of Small ribosomal subunit protein uS14 from Anaeromyxobacter sp. (strain Fw109-5).